The primary structure comprises 122 residues: Small ribosomal subunit protein uS13 (122 aa).

Positions 97–122 (PVRGQRTHTNARTRKGPAKAIAGKKK) are disordered.

Belongs to the universal ribosomal protein uS13 family. As to quaternary structure, part of the 30S ribosomal subunit. Forms a loose heterodimer with protein S19. Forms two bridges to the 50S subunit in the 70S ribosome.

Its function is as follows. Located at the top of the head of the 30S subunit, it contacts several helices of the 16S rRNA. In the 70S ribosome it contacts the 23S rRNA (bridge B1a) and protein L5 of the 50S subunit (bridge B1b), connecting the 2 subunits; these bridges are implicated in subunit movement. Contacts the tRNAs in the A and P-sites. The chain is Small ribosomal subunit protein uS13 from Bartonella henselae (strain ATCC 49882 / DSM 28221 / CCUG 30454 / Houston 1) (Rochalimaea henselae).